Consider the following 291-residue polypeptide: Acetylglutamate kinase (291 aa).

Substrate contacts are provided by residues 64 to 65 (GG), arginine 86, and asparagine 190.

The protein belongs to the acetylglutamate kinase family. ArgB subfamily.

The protein localises to the cytoplasm. The catalysed reaction is N-acetyl-L-glutamate + ATP = N-acetyl-L-glutamyl 5-phosphate + ADP. Its pathway is amino-acid biosynthesis; L-arginine biosynthesis; N(2)-acetyl-L-ornithine from L-glutamate: step 2/4. Functionally, catalyzes the ATP-dependent phosphorylation of N-acetyl-L-glutamate. The protein is Acetylglutamate kinase of Leptospira borgpetersenii serovar Hardjo-bovis (strain L550).